Consider the following 276-residue polypeptide: uncharacterized protein (276 aa).

7 consecutive transmembrane segments (helical) span residues 5–25 (TDLISIIALGLVCAFIGGMLA), 32–52 (PLVGYLVAGIAIGPFTPGFVG), 64–84 (GVILLMFGVGLHFSIGDLLAV), 104–124 (AGLAWGFGWGAGAGLVFGLAL), 149–169 (IAVGWLIVEDLAMVVALVLLP), 193–213 (LWVTLGLTLAKVGVFVAVMLV), and 244–264 (VGIAFASSELFGVSFALGAFF).

This sequence belongs to the monovalent cation:proton antiporter 2 (CPA2) transporter (TC 2.A.37) family.

The protein resides in the cell membrane. This is an uncharacterized protein from Methylorubrum extorquens (Methylobacterium dichloromethanicum).